The sequence spans 298 residues: Interferon-inducible double-stranded RNA-dependent protein kinase activator A homolog B (298 aa).

DRBM domains follow at residues Thr-20–Gly-87, Asn-112–Thr-180, and Asp-225–Ile-293.

It belongs to the PRKRA family. As to quaternary structure, homodimer. Interacts with dicer1 and eif2ak2/pkr. Also able to interact with dsRNA. Associates with ribosomes. As to expression, expressed in brain, heart, kidney, liver, nerve and spleen.

Its subcellular location is the cytoplasm. It localises to the perinuclear region. The protein resides in the nucleus. The protein localises to the nucleolus. In terms of biological role, activates eif2ak2/pkr in the absence of double-stranded RNA (dsRNA), leading to phosphorylation of eif2s1/efi2-alpha and inhibition of translation and induction of apoptosis. Required for siRNA production by dicer1 and for subsequent siRNA-mediated post-transcriptional gene silencing. Does not seem to be required for processing of pre-miRNA to miRNA by dicer1. In Xenopus laevis (African clawed frog), this protein is Interferon-inducible double-stranded RNA-dependent protein kinase activator A homolog B (prkra-b).